The primary structure comprises 205 residues: MTTTIRRKFRVSRQMKASLWGSQKDPVHKRNYAPGQHGRAPVKKISDFYKQNAAQRAFRTYYVIGKKQFANVFSKAYRGKGNTNDNLISLLESRVSSVLYRSGMVPTIFAARQLISHKHVTVNGEIVNICSFTLKEGDVVQIRDRASNIPCVVAALNSNSESPHYLEVDREKRSVKLLVLPKFEDVPYPVVMEPNLVTEYFSSKM.

In terms of domain architecture, S4 RNA-binding spans 93–171 (SRVSSVLYRS…SPHYLEVDRE (79 aa)).

It belongs to the universal ribosomal protein uS4 family. Part of the 30S ribosomal subunit. Contacts protein S5. The interaction surface between S4 and S5 is involved in control of translational fidelity.

One of the primary rRNA binding proteins, it binds directly to 16S rRNA where it nucleates assembly of the body of the 30S subunit. In terms of biological role, with S5 and S12 plays an important role in translational accuracy. This is Small ribosomal subunit protein uS4 from Neorickettsia sennetsu (strain ATCC VR-367 / Miyayama) (Ehrlichia sennetsu).